The primary structure comprises 429 residues: Aspartate--tRNA(Asp/Asn) ligase (429 aa).

Glu-166 provides a ligand contact to L-aspartate. The aspartate stretch occupies residues 188–191 (QLYK). L-aspartate is bound at residue Arg-210. ATP contacts are provided by residues 210–212 (RAE), 218–220 (RHL), and Glu-352. Glu-352 and Ser-355 together coordinate Mg(2+). Positions 355 and 359 each coordinate L-aspartate. 400 to 403 (GIER) contacts ATP.

It belongs to the class-II aminoacyl-tRNA synthetase family. Type 2 subfamily. As to quaternary structure, homodimer. Mg(2+) is required as a cofactor.

The protein localises to the cytoplasm. The enzyme catalyses tRNA(Asx) + L-aspartate + ATP = L-aspartyl-tRNA(Asx) + AMP + diphosphate. In terms of biological role, aspartyl-tRNA synthetase with relaxed tRNA specificity since it is able to aspartylate not only its cognate tRNA(Asp) but also tRNA(Asn). Reaction proceeds in two steps: L-aspartate is first activated by ATP to form Asp-AMP and then transferred to the acceptor end of tRNA(Asp/Asn). The sequence is that of Aspartate--tRNA(Asp/Asn) ligase from Methanoculleus marisnigri (strain ATCC 35101 / DSM 1498 / JR1).